A 539-amino-acid polypeptide reads, in one-letter code: Gamma-2-syntrophin (539 aa).

The 84-residue stretch at 73 to 156 (TVTLRRQPVG…DVTITVEYLR (84 aa)) folds into the PDZ domain. The 126-residue stretch at 296 to 421 (QVVHMGWVNE…WEKAFQRATF (126 aa)) folds into the PH domain.

It belongs to the syntrophin family. Interacts with the dystrophin protein DMD and related proteins DTNA and DTNB.

Its subcellular location is the cell membrane. It is found in the sarcolemma. The protein resides in the cytoplasm. It localises to the cytoskeleton. In terms of biological role, adapter protein that binds to and probably organizes the subcellular localization of a variety of proteins. May link various receptors to the actin cytoskeleton and the dystrophin glycoprotein complex. The protein is Gamma-2-syntrophin (Sntg2) of Mus musculus (Mouse).